The primary structure comprises 247 residues: HTH-type transcriptional regulator SarU (247 aa).

2 consecutive DNA-binding regions (H-T-H motif) follow at residues 53–76 and 178–201; these read LKEI…SLSK and LKDL…RLNN.

This sequence belongs to the SarA family.

The protein localises to the cytoplasm. Positive regulator of RNAII and RNAIII in a cell density-dependent manner. It can contribute to the expression of virulence genes controlled by agr. May also regulate target genes via an agr-independent pathway. This is HTH-type transcriptional regulator SarU (sarU) from Staphylococcus aureus (strain COL).